A 905-amino-acid chain; its full sequence is DNA mismatch repair protein MutS (905 aa).

Residues leucine 388–proline 410 are disordered. Glycine 638–serine 645 provides a ligand contact to ATP. A disordered region spans residues arginine 826–proline 847. The segment covering glycine 831–threonine 840 has biased composition (polar residues).

It belongs to the DNA mismatch repair MutS family.

In terms of biological role, this protein is involved in the repair of mismatches in DNA. It is possible that it carries out the mismatch recognition step. This protein has a weak ATPase activity. This chain is DNA mismatch repair protein MutS, found in Nitratidesulfovibrio vulgaris (strain DP4) (Desulfovibrio vulgaris).